Reading from the N-terminus, the 229-residue chain is MKNNFFEAVKGKLIISCQALPNEPLHSSFIMARMARAAKMAGAAGIRANSVVDIQAIQDEAGLPMIGIAKTDYPDSDVFITPTLKEMRAVAATGVEVVACQVTGQRRPHDEKLAEIVQQFRTEFPNTLLMADTDTIENALEADRLGFDMIGTTMRGYTPATQGMNIADHDFEYLKELRSQVTRPIIAEGKIDTPEKLKCCLELGCHAVVVGGAITRPLEIATRFIEAIK.

Belongs to the NanE family.

The catalysed reaction is an N-acyl-D-glucosamine 6-phosphate = an N-acyl-D-mannosamine 6-phosphate. It participates in amino-sugar metabolism; N-acetylneuraminate degradation; D-fructose 6-phosphate from N-acetylneuraminate: step 3/5. In terms of biological role, converts N-acetylmannosamine-6-phosphate (ManNAc-6-P) to N-acetylglucosamine-6-phosphate (GlcNAc-6-P). The sequence is that of Putative N-acetylmannosamine-6-phosphate 2-epimerase from Pediococcus pentosaceus (strain ATCC 25745 / CCUG 21536 / LMG 10740 / 183-1w).